The following is a 215-amino-acid chain: Guanylate kinase (215 aa).

The Guanylate kinase-like domain occupies 11 to 189 (GNVFMVVAPS…ALTELVQIIS (179 aa)). 18–25 (APSGAGKS) provides a ligand contact to ATP.

The protein belongs to the guanylate kinase family.

The protein localises to the cytoplasm. It catalyses the reaction GMP + ATP = GDP + ADP. Essential for recycling GMP and indirectly, cGMP. In Bordetella bronchiseptica (strain ATCC BAA-588 / NCTC 13252 / RB50) (Alcaligenes bronchisepticus), this protein is Guanylate kinase.